The primary structure comprises 96 residues: UPF0235 protein YggU (96 aa).

The protein belongs to the UPF0235 family.

This chain is UPF0235 protein YggU, found in Salmonella typhimurium (strain LT2 / SGSC1412 / ATCC 700720).